We begin with the raw amino-acid sequence, 432 residues long: Enolase 2 (432 aa).

Residue Gln-163 coordinates (2R)-2-phosphoglycerate. The Proton donor role is filled by Glu-205. The Mg(2+) site is built by Asp-242, Glu-287, and Asp-314. Residues Lys-339, Arg-368, Ser-369, and Lys-390 each contribute to the (2R)-2-phosphoglycerate site. Catalysis depends on Lys-339, which acts as the Proton acceptor.

The protein belongs to the enolase family. In terms of assembly, homodimer. Probably forms octamers. Mg(2+) is required as a cofactor.

Its subcellular location is the cytoplasm. The protein localises to the secreted. It localises to the cell surface. It carries out the reaction (2R)-2-phosphoglycerate = phosphoenolpyruvate + H2O. It functions in the pathway carbohydrate degradation; glycolysis; pyruvate from D-glyceraldehyde 3-phosphate: step 4/5. Its function is as follows. Catalyzes the reversible conversion of 2-phosphoglycerate (2-PG) into phosphoenolpyruvate (PEP). It is essential for the degradation of carbohydrates via glycolysis. This chain is Enolase 2, found in Lactobacillus gasseri (strain ATCC 33323 / DSM 20243 / BCRC 14619 / CIP 102991 / JCM 1131 / KCTC 3163 / NCIMB 11718 / NCTC 13722 / AM63).